A 30-amino-acid chain; its full sequence is ACLPNSCVSKGCCCGBSGYWCRQCGIKYTC.

4 cysteine pairs are disulfide-bonded: cysteine 2–cysteine 7, cysteine 12–cysteine 24, cysteine 13–cysteine 30, and cysteine 14–cysteine 21.

The protein localises to the secreted. In terms of biological role, sillucin is an antimicrobial agent produced by the thermophilic fungus Rhizomucor pusillus in liquid culture; it is effective against Gram-positive bacteria at the level of RNA metabolism. This Rhizomucor pusillus protein is Sillucin.